We begin with the raw amino-acid sequence, 130 residues long: Hypocretin neuropeptide precursor (130 aa).

The N-terminal stretch at 1 to 32 (MNFPSTKVPWAAVTLLLLLLLPPALLSLGVDA) is a signal peptide. Gln-33 carries the pyrrolidone carboxylic acid modification. 2 disulfide bridges follow: Cys-38-Cys-44 and Cys-39-Cys-46. Position 65 is a leucine amide (Leu-65). Methionine amide is present on Met-96. A propeptide spanning residues 97–130 (GRRAGAELEPHPCSGRGCPTVTTTALAPRGGSGV) is cleaved from the precursor.

Belongs to the orexin family. Post-translationally, specific enzymatic cleavages at paired basic residues yield the different active peptides. In terms of tissue distribution, restricted to neuronal cell bodies of the dorsal and lateral hypothalamus.

Its subcellular location is the rough endoplasmic reticulum. It localises to the cytoplasmic vesicle. The protein resides in the synapse. Its function is as follows. Neuropeptides that play a significant role in the regulation of food intake and sleep-wakefulness, possibly by coordinating the complex behavioral and physiologic responses of these complementary homeostatic functions. A broader role in the homeostatic regulation of energy metabolism, autonomic function, hormonal balance and the regulation of body fluids, is also suggested. Functionally, binds to orexin receptors HCRTR1/OX1R and HCRTR2/OX2R with a high affinity. Stimulates food intake. Modulates pituitary luteinizing hormone secretion in an ovarian steroid-dependent manner. Binds to orexin receptor HCRTR2/OX2R only. Stimulates food intake. Modulates pituitary luteinizing hormone secretion in an ovarian steroid-dependent manner. The chain is Hypocretin neuropeptide precursor (Hcrt) from Mus musculus (Mouse).